The sequence spans 157 residues: MSATRLDVPVVRLPHGMDLPLPEYATAASAGMDLVAAVPAEVPLVIAPGAWALVPTGLALELPEGMEAQVRPRSGLALKFGVTVLNAPGTIDADYRGEVGVILINHGREPFTVSRGMRIAQMVIAGVQQITLVETGNLGETARGVGGFGSTGLDRTP.

Substrate contacts are provided by residues 73-75 (RSG), N86, and 90-92 (TID).

Belongs to the dUTPase family. The cofactor is Mg(2+).

It catalyses the reaction dUTP + H2O = dUMP + diphosphate + H(+). It participates in pyrimidine metabolism; dUMP biosynthesis; dUMP from dCTP (dUTP route): step 2/2. In terms of biological role, this enzyme is involved in nucleotide metabolism: it produces dUMP, the immediate precursor of thymidine nucleotides and it decreases the intracellular concentration of dUTP so that uracil cannot be incorporated into DNA. The polypeptide is Deoxyuridine 5'-triphosphate nucleotidohydrolase (Azorhizobium caulinodans (strain ATCC 43989 / DSM 5975 / JCM 20966 / LMG 6465 / NBRC 14845 / NCIMB 13405 / ORS 571)).